We begin with the raw amino-acid sequence, 344 residues long: N-acetyl-gamma-glutamyl-phosphate reductase (344 aa).

C150 is an active-site residue.

This sequence belongs to the NAGSA dehydrogenase family. Type 1 subfamily.

It localises to the cytoplasm. The enzyme catalyses N-acetyl-L-glutamate 5-semialdehyde + phosphate + NADP(+) = N-acetyl-L-glutamyl 5-phosphate + NADPH + H(+). The protein operates within amino-acid biosynthesis; L-arginine biosynthesis; N(2)-acetyl-L-ornithine from L-glutamate: step 3/4. Its function is as follows. Catalyzes the NADPH-dependent reduction of N-acetyl-5-glutamyl phosphate to yield N-acetyl-L-glutamate 5-semialdehyde. This chain is N-acetyl-gamma-glutamyl-phosphate reductase, found in Pseudomonas entomophila (strain L48).